We begin with the raw amino-acid sequence, 150 residues long: Small ribosomal subunit protein uS11x (150 aa).

It belongs to the universal ribosomal protein uS11 family.

Its subcellular location is the cytoplasm. The polypeptide is Small ribosomal subunit protein uS11x (RPS14C) (Arabidopsis thaliana (Mouse-ear cress)).